The sequence spans 250 residues: Electron transfer flavoprotein subunit beta (250 aa).

Belongs to the ETF beta-subunit/FixA family. In terms of assembly, heterodimer of an alpha and a beta subunit. The cofactor is FAD. It depends on AMP as a cofactor.

Its subcellular location is the mitochondrion matrix. The electron transfer flavoprotein serves as a specific electron acceptor for several dehydrogenases, including five acyl-CoA dehydrogenases, glutaryl-CoA and sarcosine dehydrogenase. It transfers the electrons to the main mitochondrial respiratory chain via ETF-ubiquinone oxidoreductase (ETF dehydrogenase). This is Electron transfer flavoprotein subunit beta (etfb) from Dictyostelium discoideum (Social amoeba).